The chain runs to 216 residues: tRNA (guanine-N(7)-)-methyltransferase (216 aa).

4 residues coordinate S-adenosyl-L-methionine: Glu44, Glu69, Asn96, and Asp118. The active site involves Asp118. Lys122 contacts substrate. The interval 124 to 129 (RHEKRR) is interaction with RNA. Residues Asp154 and 191–194 (TEYE) contribute to the substrate site.

The protein belongs to the class I-like SAM-binding methyltransferase superfamily. TrmB family.

The enzyme catalyses guanosine(46) in tRNA + S-adenosyl-L-methionine = N(7)-methylguanosine(46) in tRNA + S-adenosyl-L-homocysteine. It participates in tRNA modification; N(7)-methylguanine-tRNA biosynthesis. Functionally, catalyzes the formation of N(7)-methylguanine at position 46 (m7G46) in tRNA. The chain is tRNA (guanine-N(7)-)-methyltransferase from Geobacillus thermodenitrificans (strain NG80-2).